Consider the following 249-residue polypeptide: Methylthioribulose-1-phosphate dehydratase (249 aa).

Residues 1–25 (MVDIKPEQTQEGNNNDHLVQSDDPE) are disordered. A compositionally biased stretch (polar residues) spans 9–18 (TQEGNNNDHL). Residue Cys105 participates in substrate binding. Residues His122 and His124 each contribute to the Zn(2+) site. The active-site Proton donor/acceptor is the Glu151. His207 is a Zn(2+) binding site.

Belongs to the aldolase class II family. MtnB subfamily. The cofactor is Zn(2+).

Its subcellular location is the cytoplasm. The catalysed reaction is 5-(methylsulfanyl)-D-ribulose 1-phosphate = 5-methylsulfanyl-2,3-dioxopentyl phosphate + H2O. It participates in amino-acid biosynthesis; L-methionine biosynthesis via salvage pathway; L-methionine from S-methyl-5-thio-alpha-D-ribose 1-phosphate: step 2/6. Functionally, catalyzes the dehydration of methylthioribulose-1-phosphate (MTRu-1-P) into 2,3-diketo-5-methylthiopentyl-1-phosphate (DK-MTP-1-P). The protein is Methylthioribulose-1-phosphate dehydratase of Arthroderma otae (strain ATCC MYA-4605 / CBS 113480) (Microsporum canis).